Consider the following 1025-residue polypeptide: Multidrug resistance protein MdtC (1025 aa).

The next 12 helical transmembrane spans lie at 3–23, 333–353, 360–380, 387–407, 431–451, 463–483, 528–548, 853–873, 875–895, 897–917, 953–973, and 984–1004; these read FFALFIYRPVATILLSVAITL, EVEQTLVISVALVILVVFLFL, IIPAVAVPVSLIGTFAAMYLC, LSLMALTIATGFVVDDAIVVL, VGFTVLSMSLSLVAVFLPLLL, FAVTLSVAIGISLLVSLTLTP, LVGAVLLGTIALNIWLYISIP, VILIIAAIATVYIVLGILYES, VHPLTILSTLPSAGVGALLAL, LFNAPFSLIALIGIMLLIGIV, PIMMTTLAALFGALPLVLSGG, and ITIVGGLVMSQLLTLYTTPVV.

Belongs to the resistance-nodulation-cell division (RND) (TC 2.A.6) family. MdtC subfamily. In terms of assembly, part of a tripartite efflux system composed of MdtA, MdtB and MdtC. MdtC forms a heteromultimer with MdtB.

It localises to the cell inner membrane. The MdtABC tripartite complex confers resistance against novobiocin and deoxycholate. This is Multidrug resistance protein MdtC from Escherichia coli O81 (strain ED1a).